Reading from the N-terminus, the 470-residue chain is Uronate isomerase (470 aa).

It belongs to the metallo-dependent hydrolases superfamily. Uronate isomerase family.

The catalysed reaction is D-glucuronate = D-fructuronate. It catalyses the reaction aldehydo-D-galacturonate = keto-D-tagaturonate. It participates in carbohydrate metabolism; pentose and glucuronate interconversion. The polypeptide is Uronate isomerase (Escherichia fergusonii (strain ATCC 35469 / DSM 13698 / CCUG 18766 / IAM 14443 / JCM 21226 / LMG 7866 / NBRC 102419 / NCTC 12128 / CDC 0568-73)).